The chain runs to 156 residues: MINISMLISNSEVSGPGGLFDFNATLPLVAIQFILLMVLLNILLYNPLLTIIEERKEYILTNLGKASELLSEANKLTQQYEQELDNVRKEAQLEITNSQKIHKEILEVELNISQKYIDNLLDTIQKDLLAKKNIALNSLDEIVQSLCVDIEARLSI.

Residues 24–44 (ATLPLVAIQFILLMVLLNILL) traverse the membrane as a helical segment.

This sequence belongs to the ATPase B chain family. In terms of assembly, F-type ATPases have 2 components, F(1) - the catalytic core - and F(0) - the membrane proton channel. F(1) has five subunits: alpha(3), beta(3), gamma(1), delta(1), epsilon(1). F(0) has four main subunits: a(1), b(1), b'(1) and c(10-14). The alpha and beta chains form an alternating ring which encloses part of the gamma chain. F(1) is attached to F(0) by a central stalk formed by the gamma and epsilon chains, while a peripheral stalk is formed by the delta, b and b' chains.

The protein resides in the plastid. It localises to the chloroplast thylakoid membrane. F(1)F(0) ATP synthase produces ATP from ADP in the presence of a proton or sodium gradient. F-type ATPases consist of two structural domains, F(1) containing the extramembraneous catalytic core and F(0) containing the membrane proton channel, linked together by a central stalk and a peripheral stalk. During catalysis, ATP synthesis in the catalytic domain of F(1) is coupled via a rotary mechanism of the central stalk subunits to proton translocation. In terms of biological role, component of the F(0) channel, it forms part of the peripheral stalk, linking F(1) to F(0). The b'-subunit is a diverged and duplicated form of b found in plants and photosynthetic bacteria. The polypeptide is ATP synthase subunit b', chloroplastic (Phaeodactylum tricornutum (strain CCAP 1055/1)).